Reading from the N-terminus, the 460-residue chain is MDQVLSKVTTTAATYATAYAVRTGLQLAGSLVAKRFSKYIQTSAPKSSQFNLELVKSRLEQKIQAITPAVDLIQLVAARGNSSLQNLVPLIIRLRDHIDDFLEFIDYEASGSEKKSPEKADEASEKIFRRCEVLLREIEETIPLINLSLTTAGITLNTALSNTISPSRLLQAQCFLELSDKRFEESHTEIQIGPKFTVVLYTSFSQPSKSDGPLDVRWQETFAKSDLYIKRVVSASQKFSYVICIDEDLNDGRYHEETVGKPTSAPVFGKKLEISLQRMSLLCYTVSGRLLNISQAKSPVLALQLTSIKDVSALDKAHQDNSEDLNNPFIKNNDKTKFHQNIDWIALEKYFEVNALDISDSESEDLSDILSDSEFSIGNRNKNIGNNEYSAQISSDPAEEEIANAMHSLKLEPETSIYLTNPGSLSLLEYLLRLCSLQELHQISCLEMTDSQLAAMLNSN.

This sequence to yeast YGL164c.

This is an uncharacterized protein from Schizosaccharomyces pombe (strain 972 / ATCC 24843) (Fission yeast).